The primary structure comprises 485 residues: MKFIVKLFPEIMIKSETVRKRFAKILTSNIRNILQKYDEETAVVRHWDYIEVRSKNEENREELIALLQRIPGIHHFLEVEEKPFTDLHHIFELTLADVAQQLQGKTFCVRVKRKGKHKFSSIEAERYIGGGLNQHIESTKVRLKNPDVTVRIDIEDDKMMLVKARHAGIGGYPIGTQEDVLSLISGGFDSGVSSYMLIRRGSRVHYCFFNLGGAAHEIGVKQMAYHIWQRYSASHKVRFIAINFEGVVGEILEKVDNGQMGVVLKRMMVRAASKVAQRFNIEAIVTGEALGQVSSQTLTNLRLIDEAADALVLRPLITHDKEQIIAMAKEIGTDDIAKSMPEFCGVISKNPTIKAVREKILAEEGNFNFEILESAVQNAKYLDIRQIAEETEKEVVEVEAISVLGENEVILDIRSPEETDEKPFESGAHDVIQMPFYKLSSQFGSLDQSKNYVLYCERGVMSKLQALYLKENGFSNVRVFAKNIH.

Positions 61 to 165 (EELIALLQRI…DDKMMLVKAR (105 aa)) constitute a THUMP domain. Residues 183-184 (LI), Lys265, Gly287, and Gln296 contribute to the ATP site. A disulfide bridge connects residues Cys344 and Cys456. The Rhodanese domain maps to 404-483 (LGENEVILDI…FSNVRVFAKN (80 aa)). Cys456 functions as the Cysteine persulfide intermediate in the catalytic mechanism.

Belongs to the ThiI family.

The protein localises to the cytoplasm. It catalyses the reaction [ThiI sulfur-carrier protein]-S-sulfanyl-L-cysteine + a uridine in tRNA + 2 reduced [2Fe-2S]-[ferredoxin] + ATP + H(+) = [ThiI sulfur-carrier protein]-L-cysteine + a 4-thiouridine in tRNA + 2 oxidized [2Fe-2S]-[ferredoxin] + AMP + diphosphate. The catalysed reaction is [ThiS sulfur-carrier protein]-C-terminal Gly-Gly-AMP + S-sulfanyl-L-cysteinyl-[cysteine desulfurase] + AH2 = [ThiS sulfur-carrier protein]-C-terminal-Gly-aminoethanethioate + L-cysteinyl-[cysteine desulfurase] + A + AMP + 2 H(+). Its pathway is cofactor biosynthesis; thiamine diphosphate biosynthesis. Its function is as follows. Catalyzes the ATP-dependent transfer of a sulfur to tRNA to produce 4-thiouridine in position 8 of tRNAs, which functions as a near-UV photosensor. Also catalyzes the transfer of sulfur to the sulfur carrier protein ThiS, forming ThiS-thiocarboxylate. This is a step in the synthesis of thiazole, in the thiamine biosynthesis pathway. The sulfur is donated as persulfide by IscS. In Haemophilus influenzae (strain PittGG), this protein is tRNA sulfurtransferase.